A 340-amino-acid polypeptide reads, in one-letter code: Dof zinc finger protein DOF2.2 (340 aa).

Positions P12–E33 are disordered. The segment at L94–K148 adopts a Dof-type zinc-finger fold. The Zn(2+) site is built by C96, C99, C121, and C124. Disordered stretches follow at residues P138 to V180 and G301 to M340. Low complexity predominate over residues S151–S165. Polar residues-rich tracts occupy residues T166 to V180 and G309 to S331.

It is found in the nucleus. Functionally, transcription factor that binds specifically to a 5'-AA[AG]G-3' consensus core sequence. In Arabidopsis thaliana (Mouse-ear cress), this protein is Dof zinc finger protein DOF2.2 (DOF2.2).